A 205-amino-acid polypeptide reads, in one-letter code: uncharacterized protein (205 aa).

Positions 1 to 40 are cleaved as a signal peptide; the sequence is MSAGKSYRKKMKQRRMNMKISKYALGILMLSLVFVLSACG. The disordered stretch occupies residues 44–82; the sequence is STKESTHDNHSDSSTHEEMDHSGSADVPEGLQESKNPKY. The segment covering 47 to 66 has biased composition (basic and acidic residues); sequence ESTHDNHSDSSTHEEMDHSG.

This is an uncharacterized protein from Bacillus subtilis (strain 168).